Reading from the N-terminus, the 424-residue chain is Anaerobic glycerol-3-phosphate dehydrogenase subunit B (424 aa).

It belongs to the anaerobic G-3-P dehydrogenase subunit B family. As to quaternary structure, composed of a catalytic GlpA/B dimer and of membrane bound GlpC. It depends on FMN as a cofactor.

The enzyme catalyses a quinone + sn-glycerol 3-phosphate = dihydroxyacetone phosphate + a quinol. It functions in the pathway polyol metabolism; glycerol degradation via glycerol kinase pathway; glycerone phosphate from sn-glycerol 3-phosphate (anaerobic route): step 1/1. Conversion of glycerol 3-phosphate to dihydroxyacetone. Uses fumarate or nitrate as electron acceptor. This is Anaerobic glycerol-3-phosphate dehydrogenase subunit B from Yersinia pestis bv. Antiqua (strain Antiqua).